The sequence spans 229 residues: Vacuolar protein sorting-associated protein 24 homolog 1 (229 aa).

The stretch at 15-60 forms a coiled coil; sequence KQLLRDWQRKLRQECRNIERQIRDIQKEERNVQKAIKEAAKRNDMV. Residues 193–215 form a disordered region; the sequence is VPAQKASTSREEEAVAEGVDDEE. Residues 206–215 show a composition bias toward acidic residues; it reads AVAEGVDDEE.

The protein belongs to the SNF7 family. Component of the endosomal sorting required for transport complex III (ESCRT-III), composed at least of VPS2, VPS20, VPS24 and VPS32. Interacts with SKD1.

Its subcellular location is the endosome. Component of the ESCRT-III complex, which is required for multivesicular bodies (MVBs) formation and sorting of endosomal cargo proteins into MVBs. The ESCRT-III complex is probably involved in the concentration of MVB cargo. In Arabidopsis thaliana (Mouse-ear cress), this protein is Vacuolar protein sorting-associated protein 24 homolog 1 (VPS24-1).